The following is a 200-amino-acid chain: uncharacterized protein (200 aa).

Involved in osmoadaptation. This is an uncharacterized protein from Emericella nidulans (strain FGSC A4 / ATCC 38163 / CBS 112.46 / NRRL 194 / M139) (Aspergillus nidulans).